We begin with the raw amino-acid sequence, 314 residues long: MMDTPIIRHPEKVRRPDNPSPRKPEWIRVRAPVSHEAAEVRQLMRSKNLFTVCEEAACPNIGECWKRRHATFMILGDICTRACAFCNVRTGKPGHVDDQEPVNLADSVVAMGLKHVVITSVDRDDLADGGAGHFHRCITEVRSRAPSCSIEVLTPDFRDKPQGALARVVEAGPDVFNHNLETVPRLYPTIRPGARYFHSLKLLDRVKTIDPGVFTKSGIMVGLGETREEVLQVMDDMRSAGVDFLTIGQYLQPTLKHVAVDRFVTPDEFKDYADIARGKGFLMVASSPLTRSSHHADRDFEDLRKARQDAAATK.

Positions 1-24 (MMDTPIIRHPEKVRRPDNPSPRKP) are disordered. Residues Cys53, Cys58, Cys64, Cys79, Cys83, Cys86, and Ser293 each contribute to the [4Fe-4S] cluster site. The region spanning 65-282 (WKRRHATFMI…ADIARGKGFL (218 aa)) is the Radical SAM core domain. Residues 294–308 (HHADRDFEDLRKARQ) show a composition bias toward basic and acidic residues. The segment at 294–314 (HHADRDFEDLRKARQDAAATK) is disordered.

This sequence belongs to the radical SAM superfamily. Lipoyl synthase family. [4Fe-4S] cluster serves as cofactor.

The protein resides in the cytoplasm. It catalyses the reaction [[Fe-S] cluster scaffold protein carrying a second [4Fe-4S](2+) cluster] + N(6)-octanoyl-L-lysyl-[protein] + 2 oxidized [2Fe-2S]-[ferredoxin] + 2 S-adenosyl-L-methionine + 4 H(+) = [[Fe-S] cluster scaffold protein] + N(6)-[(R)-dihydrolipoyl]-L-lysyl-[protein] + 4 Fe(3+) + 2 hydrogen sulfide + 2 5'-deoxyadenosine + 2 L-methionine + 2 reduced [2Fe-2S]-[ferredoxin]. The protein operates within protein modification; protein lipoylation via endogenous pathway; protein N(6)-(lipoyl)lysine from octanoyl-[acyl-carrier-protein]: step 2/2. In terms of biological role, catalyzes the radical-mediated insertion of two sulfur atoms into the C-6 and C-8 positions of the octanoyl moiety bound to the lipoyl domains of lipoate-dependent enzymes, thereby converting the octanoylated domains into lipoylated derivatives. This chain is Lipoyl synthase, found in Rhodospirillum rubrum (strain ATCC 11170 / ATH 1.1.1 / DSM 467 / LMG 4362 / NCIMB 8255 / S1).